The primary structure comprises 231 residues: Orotidine 5'-phosphate decarboxylase (231 aa).

Substrate contacts are provided by residues D11, K33, 60-69 (DLKFHDIPNT), T120, R181, Q190, G210, and R211. K62 (proton donor) is an active-site residue.

It belongs to the OMP decarboxylase family. Type 1 subfamily. As to quaternary structure, homodimer.

The enzyme catalyses orotidine 5'-phosphate + H(+) = UMP + CO2. It participates in pyrimidine metabolism; UMP biosynthesis via de novo pathway; UMP from orotate: step 2/2. Catalyzes the decarboxylation of orotidine 5'-monophosphate (OMP) to uridine 5'-monophosphate (UMP). The protein is Orotidine 5'-phosphate decarboxylase of Colwellia psychrerythraea (strain 34H / ATCC BAA-681) (Vibrio psychroerythus).